Consider the following 303-residue polypeptide: Sulfate adenylyltransferase subunit 2 (303 aa).

It belongs to the PAPS reductase family. CysD subfamily. As to quaternary structure, heterodimer composed of CysD, the smaller subunit, and CysN.

The enzyme catalyses sulfate + ATP + H(+) = adenosine 5'-phosphosulfate + diphosphate. Its pathway is sulfur metabolism; hydrogen sulfide biosynthesis; sulfite from sulfate: step 1/3. Its function is as follows. With CysN forms the ATP sulfurylase (ATPS) that catalyzes the adenylation of sulfate producing adenosine 5'-phosphosulfate (APS) and diphosphate, the first enzymatic step in sulfur assimilation pathway. APS synthesis involves the formation of a high-energy phosphoric-sulfuric acid anhydride bond driven by GTP hydrolysis by CysN coupled to ATP hydrolysis by CysD. The polypeptide is Sulfate adenylyltransferase subunit 2 (Sulfurimonas denitrificans (strain ATCC 33889 / DSM 1251) (Thiomicrospira denitrificans (strain ATCC 33889 / DSM 1251))).